The following is a 540-amino-acid chain: Raucaffricine-O-beta-D-glucosidase (540 aa).

A beta-D-glucoside contacts are provided by residues Gln-36, His-140, and 185–186; that span reads NE. Residue Glu-186 is the Proton donor of the active site. The cysteines at positions 221 and 230 are disulfide-linked. A beta-D-glucoside-binding positions include Tyr-347, Glu-420, Trp-469, 476-477, and Phe-485; that span reads EW. Glu-420 functions as the Nucleophile in the catalytic mechanism.

It belongs to the glycosyl hydrolase 1 family.

It carries out the reaction raucaffricine + H2O = vomilenine + D-glucose. The catalysed reaction is vomilenine + UDP-alpha-D-glucose = raucaffricine + UDP + H(+). Functionally, glucosidase specifically involved in alkaloid biosynthesis leading to the accumulation of several alkaloids, including ajmaline, an important plant-derived pharmaceutical used in the treatment of heart disorders. This Rauvolfia serpentina (Serpentine wood) protein is Raucaffricine-O-beta-D-glucosidase.